Consider the following 78-residue polypeptide: MLVLSRKANESIKIDSNIEISILEIKKDSVKIAIKAPENIKILRSEIYDIIKEENKKSILQDKNNIHKIKNLFDYFNK.

The protein belongs to the CsrA/RsmA family. In terms of assembly, homodimer; the beta-strands of each monomer intercalate to form a hydrophobic core, while the alpha-helices form wings that extend away from the core.

The protein localises to the cytoplasm. Its function is as follows. A translational regulator that binds mRNA to regulate translation initiation and/or mRNA stability. Usually binds in the 5'-UTR at or near the Shine-Dalgarno sequence preventing ribosome-binding, thus repressing translation. Its main target seems to be the major flagellin gene, while its function is anatagonized by FliW. This chain is Translational regulator CsrA, found in Borrelia hermsii (strain HS1 / DAH).